The following is a 297-amino-acid chain: Mitochondrial ornithine transporter 1 (297 aa).

3 Solcar repeats span residues 15–97, 102–205, and 212–292; these read GSPA…LKLT, DPTL…FKKN, and KPHF…FRET. 6 helical membrane-spanning segments follow: residues 18–38, 72–91, 107–127, 184–204, 215–235, and 264–285; these read ASTF…GYPL, GLTL…FTVY, YFIS…PFEY, HLTR…TFKK, FAYA…VFPV, and IYRG…NFTL.

This sequence belongs to the mitochondrial carrier (TC 2.A.29) family.

It localises to the mitochondrion inner membrane. Required for arginine biosynthesis. Transports ornithine synthesized from glutamate in the mitochondrial matrix to the cytosol, where it is converted to arginine. This is Mitochondrial ornithine transporter 1 from Schizosaccharomyces pombe (strain 972 / ATCC 24843) (Fission yeast).